The sequence spans 336 residues: Fructose-1,6-bisphosphatase class 1 (336 aa).

Residues Glu90, Asp112, Leu114, and Asp115 each contribute to the Mg(2+) site. Substrate-binding positions include 115–118, Asn207, and Lys273; that span reads DGSS. Glu279 is a binding site for Mg(2+).

It belongs to the FBPase class 1 family. Homotetramer. Mg(2+) serves as cofactor.

The protein resides in the cytoplasm. The catalysed reaction is beta-D-fructose 1,6-bisphosphate + H2O = beta-D-fructose 6-phosphate + phosphate. Its pathway is carbohydrate biosynthesis; gluconeogenesis. This is Fructose-1,6-bisphosphatase class 1 from Xanthomonas axonopodis pv. citri (strain 306).